The primary structure comprises 435 residues: Proline and serine-rich protein 2 (435 aa).

A compositionally biased stretch (basic and acidic residues) spans M1 to A10. Residues M1–R22 are disordered. A Phosphoserine modification is found at S8. The span at S11–S20 shows a compositional bias: polar residues. S43 bears the Phosphoserine mark. Position 45 is a phosphothreonine (T45). Composition is skewed to low complexity over residues P92–S102 and P113–G126. 2 disordered regions span residues P92–V276 and A295–A420. Position 146 is a phosphothreonine (T146). Residues T146–D169 show a composition bias toward pro residues. At S166 the chain carries Phosphoserine. T167 is subject to Phosphothreonine. 3 positions are modified to phosphoserine: S179, S212, and S215. Over residues P228 to D237 the composition is skewed to low complexity. Position 252 is an asymmetric dimethylarginine; alternate (R252). Omega-N-methylarginine; alternate is present on R252. Over residues A302–S311 the composition is skewed to gly residues. A Phosphoserine modification is found at S312. R320 carries the post-translational modification Omega-N-methylarginine; alternate. R320 bears the Dimethylated arginine; alternate mark. An Omega-N-methylarginine modification is found at R378. S400 bears the Phosphoserine mark. An Omega-N-methylarginine modification is found at R414.

The sequence is that of Proline and serine-rich protein 2 (PROSER2) from Homo sapiens (Human).